The primary structure comprises 238 residues: 2-C-methyl-D-erythritol 4-phosphate cytidylyltransferase (238 aa).

This sequence belongs to the IspD/TarI cytidylyltransferase family. IspD subfamily.

It carries out the reaction 2-C-methyl-D-erythritol 4-phosphate + CTP + H(+) = 4-CDP-2-C-methyl-D-erythritol + diphosphate. It functions in the pathway isoprenoid biosynthesis; isopentenyl diphosphate biosynthesis via DXP pathway; isopentenyl diphosphate from 1-deoxy-D-xylulose 5-phosphate: step 2/6. Functionally, catalyzes the formation of 4-diphosphocytidyl-2-C-methyl-D-erythritol from CTP and 2-C-methyl-D-erythritol 4-phosphate (MEP). The polypeptide is 2-C-methyl-D-erythritol 4-phosphate cytidylyltransferase (Paraburkholderia phytofirmans (strain DSM 17436 / LMG 22146 / PsJN) (Burkholderia phytofirmans)).